Here is a 319-residue protein sequence, read N- to C-terminus: Ribosomal RNA small subunit methyltransferase H (319 aa).

Residues 34–36 (GGH), Asp54, Phe83, Asp104, and Gln111 each bind S-adenosyl-L-methionine.

This sequence belongs to the methyltransferase superfamily. RsmH family.

The protein localises to the cytoplasm. The enzyme catalyses cytidine(1402) in 16S rRNA + S-adenosyl-L-methionine = N(4)-methylcytidine(1402) in 16S rRNA + S-adenosyl-L-homocysteine + H(+). Specifically methylates the N4 position of cytidine in position 1402 (C1402) of 16S rRNA. In Lactiplantibacillus plantarum (strain ATCC BAA-793 / NCIMB 8826 / WCFS1) (Lactobacillus plantarum), this protein is Ribosomal RNA small subunit methyltransferase H.